The chain runs to 223 residues: Endo-1,4-beta-xylanase 2 (223 aa).

An N-terminal signal peptide occupies residues 1–19 (MVSFTSLLAGVAAISGVLA). A propeptide spanning residues 20-33 (APAAEVESVAVEKR) is cleaved from the precursor. Gln34 is subject to Pyrrolidone carboxylic acid. Positions 34–222 (QTIQPGTGYN…FSSGSASITV (189 aa)) constitute a GH11 domain. 2 N-linked (GlcNAc...) asparagine glycosylation sites follow: Asn71 and Asn94. Substrate-binding residues include Tyr106 and Tyr110. Glu119 acts as the Nucleophile in catalysis. Residues Tyr121, Arg155, Pro159, Gln169, and Tyr204 each coordinate substrate. Glu210 serves as the catalytic Proton donor.

The protein belongs to the glycosyl hydrolase 11 (cellulase G) family.

It localises to the secreted. The enzyme catalyses Endohydrolysis of (1-&gt;4)-beta-D-xylosidic linkages in xylans.. The protein operates within glycan degradation; xylan degradation. Its function is as follows. Glycoside hydrolase involved in the hydrolysis of xylan, a major plant cell wall hemicellulose made up of 1,4-beta-linked D-xylopyranose residues. Catalyzes the endohydrolysis of the main-chain 1,4-beta-glycosidic bonds connecting the xylose subunits yielding various xylooligosaccharides and xylose. The catalysis proceeds by a double-displacement reaction mechanism with a putative covalent glycosyl-enzyme intermediate, with retention of the anomeric configuration. Produces xylobiose and xylose as the main degradation products. The chain is Endo-1,4-beta-xylanase 2 from Hypocrea jecorina (strain ATCC 56765 / BCRC 32924 / NRRL 11460 / Rut C-30) (Trichoderma reesei).